We begin with the raw amino-acid sequence, 272 residues long: Tryptophan synthase alpha chain (272 aa).

Residues Glu49 and Asp60 each act as proton acceptor in the active site.

This sequence belongs to the TrpA family. Tetramer of two alpha and two beta chains.

It carries out the reaction (1S,2R)-1-C-(indol-3-yl)glycerol 3-phosphate + L-serine = D-glyceraldehyde 3-phosphate + L-tryptophan + H2O. It participates in amino-acid biosynthesis; L-tryptophan biosynthesis; L-tryptophan from chorismate: step 5/5. Its function is as follows. The alpha subunit is responsible for the aldol cleavage of indoleglycerol phosphate to indole and glyceraldehyde 3-phosphate. In Psychrobacter cryohalolentis (strain ATCC BAA-1226 / DSM 17306 / VKM B-2378 / K5), this protein is Tryptophan synthase alpha chain.